Here is a 355-residue protein sequence, read N- to C-terminus: Fructose-1,6-bisphosphatase (355 aa).

AMP is bound by residues I25–H30 and T37–S41. The Mg(2+) site is built by D78 and E107. K121–Y122 provides a ligand contact to AMP. Residues D127, I129, and D130 each coordinate Mg(2+). Position 130 to 133 (D130 to S133) interacts with substrate. K149 is a binding site for AMP. Substrate-binding positions include N230 to N233, R263 to M268, Y284, and K294 to R296. E300 contributes to the Mg(2+) binding site.

The protein belongs to the FBPase class 1 family. In terms of assembly, homotetramer. Mg(2+) serves as cofactor.

It catalyses the reaction beta-D-fructose 1,6-bisphosphate + H2O = beta-D-fructose 6-phosphate + phosphate. Its pathway is carbohydrate biosynthesis; gluconeogenesis. Its activity is regulated as follows. Subject to complex allosteric regulation. The enzyme can assume an active R-state, or an inactive T-state. Intermediate conformations may exist. AMP acts as allosteric inhibitor. AMP binding affects the turnover of bound substrate and not the affinity for substrate. This Kluyveromyces lactis (strain ATCC 8585 / CBS 2359 / DSM 70799 / NBRC 1267 / NRRL Y-1140 / WM37) (Yeast) protein is Fructose-1,6-bisphosphatase (FBP1).